The sequence spans 291 residues: Protein/nucleic acid deglycase HchA (291 aa).

The span at 1–18 (MSNERDTSRTPTPDHAEH) shows a compositional bias: basic and acidic residues. The segment at 1–20 (MSNERDTSRTPTPDHAEHNA) is disordered. The Nucleophile role is filled by Cys-188.

Belongs to the peptidase C56 family. HchA subfamily.

Its subcellular location is the cytoplasm. The enzyme catalyses N(omega)-(1-hydroxy-2-oxopropyl)-L-arginyl-[protein] + H2O = lactate + L-arginyl-[protein] + H(+). It catalyses the reaction N(6)-(1-hydroxy-2-oxopropyl)-L-lysyl-[protein] + H2O = lactate + L-lysyl-[protein] + H(+). The catalysed reaction is S-(1-hydroxy-2-oxopropyl)-L-cysteinyl-[protein] + H2O = lactate + L-cysteinyl-[protein] + H(+). It carries out the reaction N(omega)-(1-hydroxy-2-oxoethyl)-L-arginyl-[protein] + H2O = L-arginyl-[protein] + glycolate + H(+). The enzyme catalyses N(6)-(1-hydroxy-2-oxoethyl)-L-lysyl-[protein] + H2O = glycolate + L-lysyl-[protein] + H(+). It catalyses the reaction S-(1-hydroxy-2-oxoethyl)-L-cysteinyl-[protein] + H2O = glycolate + L-cysteinyl-[protein] + H(+). The catalysed reaction is N(2)-(1-hydroxy-2-oxopropyl)-dGTP + H2O = lactate + dGTP + H(+). It carries out the reaction N(2)-(1-hydroxy-2-oxopropyl)-GTP + H2O = lactate + GTP + H(+). The enzyme catalyses N(2)-(1-hydroxy-2-oxopropyl)-GDP + H2O = lactate + GDP + H(+). It catalyses the reaction N(2)-(1-hydroxy-2-oxopropyl)-GMP + H2O = lactate + GMP + H(+). The catalysed reaction is N(2)-(1-hydroxy-2-oxoethyl)-dGTP + H2O = dGTP + glycolate + H(+). It carries out the reaction N(2)-(1-hydroxy-2-oxoethyl)-GTP + H2O = glycolate + GTP + H(+). The enzyme catalyses N(2)-(1-hydroxy-2-oxoethyl)-GDP + H2O = glycolate + GDP + H(+). It catalyses the reaction N(2)-(1-hydroxy-2-oxoethyl)-GMP + H2O = glycolate + GMP + H(+). The catalysed reaction is an N(2)-(1-hydroxy-2-oxopropyl)-guanosine in RNA + H2O = a guanosine in RNA + lactate + H(+). It carries out the reaction an N(2)-(1-hydroxy-2-oxopropyl)-2'-deoxyguanosine in DNA + H2O = a 2'-deoxyguanosine in DNA + lactate + H(+). The enzyme catalyses an N(2)-(1-hydroxy-2-oxoethyl)-guanosine in RNA + H2O = a guanosine in RNA + glycolate + H(+). It catalyses the reaction an N(2)-(1-hydroxy-2-oxoethyl)-2'-deoxyguanosine in DNA + H2O = a 2'-deoxyguanosine in DNA + glycolate + H(+). Protein and nucleotide deglycase that catalyzes the deglycation of the Maillard adducts formed between amino groups of proteins or nucleotides and reactive carbonyl groups of glyoxals. Thus, functions as a protein deglycase that repairs methylglyoxal- and glyoxal-glycated proteins, and releases repaired proteins and lactate or glycolate, respectively. Deglycates cysteine, arginine and lysine residues in proteins, and thus reactivates these proteins by reversing glycation by glyoxals. Acts on early glycation intermediates (hemithioacetals and aminocarbinols), preventing the formation of Schiff bases and advanced glycation endproducts (AGE). Also functions as a nucleotide deglycase able to repair glycated guanine in the free nucleotide pool (GTP, GDP, GMP, dGTP) and in DNA and RNA. Is thus involved in a major nucleotide repair system named guanine glycation repair (GG repair), dedicated to reversing methylglyoxal and glyoxal damage via nucleotide sanitization and direct nucleic acid repair. Plays an important role in protecting cells from carbonyl stress. The chain is Protein/nucleic acid deglycase HchA from Pseudomonas aeruginosa (strain LESB58).